We begin with the raw amino-acid sequence, 467 residues long: Light-independent protochlorophyllide reductase subunit N (467 aa).

3 residues coordinate [4Fe-4S] cluster: C23, C48, and C108.

This sequence belongs to the BchN/ChlN family. Protochlorophyllide reductase is composed of three subunits; ChlL, ChlN and ChlB. Forms a heterotetramer of two ChlB and two ChlN subunits. [4Fe-4S] cluster is required as a cofactor.

The catalysed reaction is chlorophyllide a + oxidized 2[4Fe-4S]-[ferredoxin] + 2 ADP + 2 phosphate = protochlorophyllide a + reduced 2[4Fe-4S]-[ferredoxin] + 2 ATP + 2 H2O. The protein operates within porphyrin-containing compound metabolism; chlorophyll biosynthesis (light-independent). Its function is as follows. Component of the dark-operative protochlorophyllide reductase (DPOR) that uses Mg-ATP and reduced ferredoxin to reduce ring D of protochlorophyllide (Pchlide) to form chlorophyllide a (Chlide). This reaction is light-independent. The NB-protein (ChlN-ChlB) is the catalytic component of the complex. This Trichormus variabilis (strain ATCC 29413 / PCC 7937) (Anabaena variabilis) protein is Light-independent protochlorophyllide reductase subunit N.